A 313-amino-acid chain; its full sequence is Aspartate carbamoyltransferase catalytic subunit (313 aa).

Carbamoyl phosphate is bound by residues R58 and T59. K86 contributes to the L-aspartate binding site. 3 residues coordinate carbamoyl phosphate: R108, H136, and Q139. 2 residues coordinate L-aspartate: R169 and R223. 2 residues coordinate carbamoyl phosphate: G265 and P266.

Belongs to the aspartate/ornithine carbamoyltransferase superfamily. ATCase family. In terms of assembly, heterododecamer (2C3:3R2) of six catalytic PyrB chains organized as two trimers (C3), and six regulatory PyrI chains organized as three dimers (R2).

It carries out the reaction carbamoyl phosphate + L-aspartate = N-carbamoyl-L-aspartate + phosphate + H(+). Its pathway is pyrimidine metabolism; UMP biosynthesis via de novo pathway; (S)-dihydroorotate from bicarbonate: step 2/3. Functionally, catalyzes the condensation of carbamoyl phosphate and aspartate to form carbamoyl aspartate and inorganic phosphate, the committed step in the de novo pyrimidine nucleotide biosynthesis pathway. This is Aspartate carbamoyltransferase catalytic subunit from Anaeromyxobacter dehalogenans (strain 2CP-C).